The following is a 126-amino-acid chain: Probable prefoldin subunit 4 (126 aa).

Belongs to the prefoldin subunit beta family. In terms of assembly, heterohexamer of two PFD-alpha type and four PFD-beta type subunits.

In terms of biological role, binds specifically to cytosolic chaperonin (c-CPN) and transfers target proteins to it. Binds to nascent polypeptide chain and promotes folding in an environment in which there are many competing pathways for nonnative proteins. Appears to play a non-essential role. This Caenorhabditis briggsae protein is Probable prefoldin subunit 4.